Reading from the N-terminus, the 340-residue chain is MTSLIRSNSWGSFVQTITSSSNRLYIGWFGLLVFPLLSLATVAYITAFFLAPAVDIDGIREPVAGSLIYGNNIISGAVIPSSNAIGVHFYPLWESLGLDEWLYNGGTYQFVVFHFFLGVCGWMGREWEFSYRLGMRPWIFVAFSAPIAAAAAVFIIYPIGQGSFSDGMPLGIQGTFNFMLVFQAEHKILMHPFHILGVAGVFGGSLFSAMHGSLVSSSLLAETAGSESLNNGYVFGQEDETYSISAAHAYFGRLIFQYASFNNSRSLHFFLAAWPVIGIWFTSLGVATMAFNLNGFNFNQSILDESGHYINSWADILNRADLGIEVMHERNAHNFPLDLA.

A run of 3 helical transmembrane segments spans residues 25–42 (YIGWFGLLVFPLLSLATV), 114–129 (HFFLGVCGWMGREWEF), and 138–152 (WIFVAFSAPIAAAAA). His114 lines the chlorophyll a pocket. Trp122 contributes to the pheophytin a binding site. [CaMn4O5] cluster contacts are provided by Asp166 and Glu185. Residues 193 to 214 (FHILGVAGVFGGSLFSAMHGSL) form a helical membrane-spanning segment. Residue His194 participates in chlorophyll a binding. A quinone-binding positions include His211 and 260-261 (SF). His211 contacts Fe cation. His268 contributes to the Fe cation binding site. Residues 270–284 (FLAAWPVIGIWFTSL) traverse the membrane as a helical segment. [CaMn4O5] cluster-binding residues include His328, Glu329, Asp338, and Ala340.

Belongs to the reaction center PufL/M/PsbA/D family. PSII is composed of 1 copy each of membrane proteins PsbA, PsbB, PsbC, PsbD, PsbE, PsbF, PsbH, PsbI, PsbJ, PsbK, PsbL, PsbM, PsbT, PsbX, PsbY, PsbZ, Psb30/Ycf12, at least 3 peripheral proteins of the oxygen-evolving complex and a large number of cofactors. It forms dimeric complexes. The D1/D2 heterodimer binds P680, chlorophylls that are the primary electron donor of PSII, and subsequent electron acceptors. It shares a non-heme iron and each subunit binds pheophytin, quinone, additional chlorophylls, carotenoids and lipids. D1 provides most of the ligands for the Mn4-Ca-O5 cluster of the oxygen-evolving complex (OEC). There is also a Cl(-1) ion associated with D1 and D2, which is required for oxygen evolution. The PSII complex binds additional chlorophylls, carotenoids and specific lipids. serves as cofactor. Post-translationally, tyr-157 forms a radical intermediate that is referred to as redox-active TyrZ, YZ or Y-Z.

It is found in the plastid. Its subcellular location is the chloroplast thylakoid membrane. The catalysed reaction is 2 a plastoquinone + 4 hnu + 2 H2O = 2 a plastoquinol + O2. In terms of biological role, photosystem II (PSII) is a light-driven water:plastoquinone oxidoreductase that uses light energy to abstract electrons from H(2)O, generating O(2) and a proton gradient subsequently used for ATP formation. It consists of a core antenna complex that captures photons, and an electron transfer chain that converts photonic excitation into a charge separation. The D1/D2 (PsbA/PsbD) reaction center heterodimer binds P680, the primary electron donor of PSII as well as several subsequent electron acceptors. The protein is Photosystem II protein D1 of Amphidinium operculatum (Dinoflagellate).